The chain runs to 200 residues: Protein GrpE (200 aa).

The tract at residues 15 to 47 (DLEMDLNEEELEESEVNEDKEFEELDKSEEENE) is disordered. Residues 16-47 (LEMDLNEEELEESEVNEDKEFEELDKSEEENE) are compositionally biased toward acidic residues.

The protein belongs to the GrpE family. Homodimer.

It localises to the cytoplasm. Functionally, participates actively in the response to hyperosmotic and heat shock by preventing the aggregation of stress-denatured proteins, in association with DnaK and GrpE. It is the nucleotide exchange factor for DnaK and may function as a thermosensor. Unfolded proteins bind initially to DnaJ; upon interaction with the DnaJ-bound protein, DnaK hydrolyzes its bound ATP, resulting in the formation of a stable complex. GrpE releases ADP from DnaK; ATP binding to DnaK triggers the release of the substrate protein, thus completing the reaction cycle. Several rounds of ATP-dependent interactions between DnaJ, DnaK and GrpE are required for fully efficient folding. This chain is Protein GrpE, found in Clostridium tetani (strain Massachusetts / E88).